Reading from the N-terminus, the 97-residue chain is UPF0416 protein RC0826 (97 aa).

The first 33 residues, 1–33 (MRIFVKAAISTAAWRFYAHPTVAMGICVGTALA), serve as a signal peptide directing secretion.

This sequence belongs to the UPF0416 family.

The polypeptide is UPF0416 protein RC0826 (Rickettsia conorii (strain ATCC VR-613 / Malish 7)).